A 1394-amino-acid polypeptide reads, in one-letter code: ABC transporter patM (1394 aa).

The disordered stretch occupies residues Met1–Ala41. The 244-residue stretch at Ser98–Ser341 folds into the ABC transporter 1 domain. 6 helical membrane passes run Ser437–Phe457, Leu467–Ala487, Ile511–Tyr531, Gly546–Phe566, Ala579–Pro599, and Val688–Met708. Positions Val727–Asn755 are disordered. A compositionally biased stretch (polar residues) spans Glu737–Asn755. The ABC transporter 2 domain occupies Asp767–Ser1013. Gly808–Thr815 serves as a coordination point for ATP. The next 6 helical transmembrane spans lie at Gly1131–Leu1151, Leu1177–Val1197, Phe1219–Leu1239, Ala1245–Ser1265, Ile1280–Ile1300, and Ile1368–Leu1388.

This sequence belongs to the ABC transporter superfamily. ABCG family. PDR (TC 3.A.1.205) subfamily.

It localises to the vacuole membrane. Its subcellular location is the cell membrane. It functions in the pathway mycotoxin biosynthesis; patulin biosynthesis. In terms of biological role, ABC transporter; part of the gene cluster that mediates the biosynthesis of patulin, an acetate-derived tetraketide mycotoxin produced by several fungal species that shows antimicrobial properties against several bacteria. May be involved in the secretion of E-ascladiol to be converted to patulin by the secreted patulin synthase patE. The chain is ABC transporter patM from Penicillium expansum (Blue mold rot fungus).